The sequence spans 694 residues: DNA ligase (694 aa).

Residues 41–45, 91–92, and E121 each bind NAD(+); these read DAEFD and SL. The N6-AMP-lysine intermediate role is filled by K123. Residues R144, E184, K300, and K324 each contribute to the NAD(+) site. Residues C418, C421, C437, and C443 each coordinate Zn(2+). One can recognise a BRCT domain in the interval 607 to 694; that stretch reads SVLPTCEGLT…QGPPVQQVVD (88 aa).

Belongs to the NAD-dependent DNA ligase family. LigA subfamily. Mg(2+) is required as a cofactor. The cofactor is Mn(2+).

It catalyses the reaction NAD(+) + (deoxyribonucleotide)n-3'-hydroxyl + 5'-phospho-(deoxyribonucleotide)m = (deoxyribonucleotide)n+m + AMP + beta-nicotinamide D-nucleotide.. Functionally, DNA ligase that catalyzes the formation of phosphodiester linkages between 5'-phosphoryl and 3'-hydroxyl groups in double-stranded DNA using NAD as a coenzyme and as the energy source for the reaction. It is essential for DNA replication and repair of damaged DNA. This Mycobacterium leprae (strain TN) protein is DNA ligase.